We begin with the raw amino-acid sequence, 143 residues long: uncharacterized protein (143 aa).

An N-terminal signal peptide occupies residues 1–27 (MSDEIARLVADVFELAGLLRRSGEVVA).

This is an uncharacterized protein from Mycobacterium tuberculosis (strain CDC 1551 / Oshkosh).